A 132-amino-acid chain; its full sequence is Ribosome-binding factor A (132 aa).

It belongs to the RbfA family. As to quaternary structure, monomer. Binds 30S ribosomal subunits, but not 50S ribosomal subunits or 70S ribosomes.

It is found in the cytoplasm. Functionally, one of several proteins that assist in the late maturation steps of the functional core of the 30S ribosomal subunit. Associates with free 30S ribosomal subunits (but not with 30S subunits that are part of 70S ribosomes or polysomes). Required for efficient processing of 16S rRNA. May interact with the 5'-terminal helix region of 16S rRNA. This chain is Ribosome-binding factor A, found in Burkholderia cenocepacia (strain ATCC BAA-245 / DSM 16553 / LMG 16656 / NCTC 13227 / J2315 / CF5610) (Burkholderia cepacia (strain J2315)).